Reading from the N-terminus, the 253-residue chain is Pimeloyl-[acyl-carrier protein] methyl ester esterase (253 aa).

Substrate is bound by residues Trp18, Ser78–Leu79, and Phe139–Asp143. Ser78 (nucleophile) is an active-site residue. Residues Asp203 and His231 contribute to the active site. A substrate-binding site is contributed by His231.

Belongs to the AB hydrolase superfamily. Carboxylesterase BioH family. Monomer.

The protein localises to the cytoplasm. It carries out the reaction 6-carboxyhexanoyl-[ACP] methyl ester + H2O = 6-carboxyhexanoyl-[ACP] + methanol + H(+). It functions in the pathway cofactor biosynthesis; biotin biosynthesis. In terms of biological role, the physiological role of BioH is to remove the methyl group introduced by BioC when the pimeloyl moiety is complete. It allows to synthesize pimeloyl-ACP via the fatty acid synthetic pathway through the hydrolysis of the ester bonds of pimeloyl-ACP esters. This chain is Pimeloyl-[acyl-carrier protein] methyl ester esterase, found in Xanthomonas campestris pv. campestris (strain 8004).